A 497-amino-acid polypeptide reads, in one-letter code: Early growth response protein 1-A (497 aa).

Residues 139-165 are compositionally biased toward low complexity; the sequence is SPSSAPSSSPSSSSSSSSSQSPPLSCS. Disordered stretches follow at residues 139-169, 175-194, and 286-309; these read SPSS…VQSN, YSAA…DHSP, and PSRM…YGCP. 3 C2H2-type zinc fingers span residues 306 to 330, 336 to 358, and 364 to 386; these read YGCP…IRIH, FQCR…IRTH, and FACD…TKIH. The disordered stretch occupies residues 377 to 441; that stretch reads DERKRHTKIH…SYPSPVHSSF (65 aa). The segment covering 381-391 has biased composition (basic residues); it reads RHTKIHLRQKD. Low complexity predominate over residues 397–441; that stretch reads ATPVSVASPVSSYSPSASTSYPSPVPTSYSSPVSSSYPSPVHSSF.

The protein belongs to the EGR C2H2-type zinc-finger protein family. In terms of tissue distribution, expressed in the presumptive mesoderm. In blastula embryos, expressed in the dorsal marginal zone, and at the onset of gastrulation expression is specific to the Spemann organizer. As gastrulation proceeds, expressed in a ring around the yolk plug. This expression is maintained in advanced gastrulae, with weak expression also extending into the dorsal midline. By the neurula stage, expression is excluded from the notochord. In late tailbud stages, expressed in two spots in the anterior forebrain, which are connected via a bridge of cells that also show expression.

It localises to the nucleus. It is found in the cytoplasm. In terms of biological role, transcriptional regulator. Recognizes and binds to the DNA sequence 5'-GCG(T/G)GGGCG-3'(EGR-site) in the promoter region of target genes. Binds double-stranded target DNA, irrespective of the cytosine methylation status. Regulates the transcription of numerous target genes, and thereby plays an important role in regulating the response to growth factors, DNA damage, and ischemia. Plays a role in the regulation of cell survival, proliferation and cell death. Mediates responses to ischemia and hypoxia; regulates the expression of proteins that are involved in inflammatory processes. Plays a role in regulating the expression of circadian clock genes. The chain is Early growth response protein 1-A (egr1-a) from Xenopus laevis (African clawed frog).